A 178-amino-acid polypeptide reads, in one-letter code: Inner membrane-spanning protein YciB (178 aa).

5 helical membrane-spanning segments follow: residues 22–42, 50–70, 76–96, 121–141, and 149–169; these read IFVA…VSWL, MALF…ALHN, WKVT…HWFM, IAWA…AFWL, and FKVF…GIYI.

Belongs to the YciB family.

The protein resides in the cell inner membrane. In terms of biological role, plays a role in cell envelope biogenesis, maintenance of cell envelope integrity and membrane homeostasis. In Erwinia tasmaniensis (strain DSM 17950 / CFBP 7177 / CIP 109463 / NCPPB 4357 / Et1/99), this protein is Inner membrane-spanning protein YciB.